A 275-amino-acid chain; its full sequence is uncharacterized protein (275 aa).

2 disordered regions span residues 1–25 and 185–275; these read MIGGERVLLGSQKREPSNEEDDQEQ and QRGE…RHHM. Basic and acidic residues predominate over residues 228-239; that stretch reads KPGDGEENAKDD.

This is an uncharacterized protein from Neurospora crassa (strain ATCC 24698 / 74-OR23-1A / CBS 708.71 / DSM 1257 / FGSC 987).